The following is a 119-amino-acid chain: Large ribosomal subunit protein uL18 (119 aa).

The protein belongs to the universal ribosomal protein uL18 family. In terms of assembly, part of the 50S ribosomal subunit; part of the 5S rRNA/L5/L18/L25 subcomplex. Contacts the 5S and 23S rRNAs.

Functionally, this is one of the proteins that bind and probably mediate the attachment of the 5S RNA into the large ribosomal subunit, where it forms part of the central protuberance. This is Large ribosomal subunit protein uL18 from Clostridium botulinum (strain Alaska E43 / Type E3).